Here is a 260-residue protein sequence, read N- to C-terminus: MSYTPLPNINDFPTLGNPLEDAKRAAAYRAVDENLNFDEHRIIGVGSGSTVVYVAERIGQYLKDEKYHDKVSKFICIPTGYQSRNLIQDNGLILGSIEQHPHVDIAFDGADEVDHNLQLIKGGGACLFQEKLVSTSAKIFIVVADSRKKSDTNLGINWKRGVPIEIVPSAWSRVQHDLTSILHANSAPVRQGGSAKAGPVVTDNMNFLIDADFGEIQDPKALHEQIKMLVGVVETGLFIDNAHRAYFGKPDGSVEVIDKK.

This sequence belongs to the ribose 5-phosphate isomerase family.

It is found in the cytoplasm. It carries out the reaction aldehydo-D-ribose 5-phosphate = D-ribulose 5-phosphate. It participates in carbohydrate degradation; pentose phosphate pathway; D-ribose 5-phosphate from D-ribulose 5-phosphate (non-oxidative stage): step 1/1. The protein is Ribose-5-phosphate isomerase (RKI1) of Candida glabrata (strain ATCC 2001 / BCRC 20586 / JCM 3761 / NBRC 0622 / NRRL Y-65 / CBS 138) (Yeast).